A 501-amino-acid chain; its full sequence is Leukocyte receptor cluster member 9 (501 aa).

4 disordered regions span residues 1 to 43 (MGSR…PAPP), 61 to 86 (RQPHPGAPAPPGREAQPEAGAKKPPL), 203 to 234 (GQEAQAAPKRGSTRPLCTGHQEPGVEEPGELE), and 281 to 300 (QALGVPGGSAETTEAEWGPA). The C3H1-type zinc finger occupies 40 to 67 (PAPPPACRFFLEGRCRFGARCRQPHPGA).

In Homo sapiens (Human), this protein is Leukocyte receptor cluster member 9 (LENG9).